Reading from the N-terminus, the 508-residue chain is UDP-N-acetylmuramyl-tripeptide synthetase (508 aa).

Ser-35 is a UDP-N-acetyl-alpha-D-muramoyl-L-alanyl-D-glutamate binding site. Residue 118-124 (GTDGKSS) coordinates ATP. UDP-N-acetyl-alpha-D-muramoyl-L-alanyl-D-glutamate-binding positions include 163 to 164 (ST), Thr-190, and Arg-200. An N6-carboxylysine modification is found at Lys-232.

Belongs to the MurCDEF family. MurE subfamily. Post-translationally, carboxylation is probably crucial for Mg(2+) binding and, consequently, for the gamma-phosphate positioning of ATP.

The protein localises to the cytoplasm. Its pathway is cell wall biogenesis; peptidoglycan biosynthesis. Its function is as follows. Catalyzes the addition of an amino acid to the nucleotide precursor UDP-N-acetylmuramoyl-L-alanyl-D-glutamate (UMAG) in the biosynthesis of bacterial cell-wall peptidoglycan. The protein is UDP-N-acetylmuramyl-tripeptide synthetase of Borrelia garinii subsp. bavariensis (strain ATCC BAA-2496 / DSM 23469 / PBi) (Borreliella bavariensis).